The sequence spans 263 residues: Shikimate dehydrogenase (NADP(+)) (263 aa).

Shikimate contacts are provided by residues 16–18 (SKS) and threonine 65. Lysine 69 acts as the Proton acceptor in catalysis. 2 residues coordinate shikimate: asparagine 90 and aspartate 105. NADP(+) is bound by residues 125–129 (GSGGS) and leucine 208. A shikimate-binding site is contributed by tyrosine 210. Glycine 230 lines the NADP(+) pocket.

This sequence belongs to the shikimate dehydrogenase family. In terms of assembly, homodimer.

The catalysed reaction is shikimate + NADP(+) = 3-dehydroshikimate + NADPH + H(+). It participates in metabolic intermediate biosynthesis; chorismate biosynthesis; chorismate from D-erythrose 4-phosphate and phosphoenolpyruvate: step 4/7. In terms of biological role, involved in the biosynthesis of the chorismate, which leads to the biosynthesis of aromatic amino acids. Catalyzes the reversible NADPH linked reduction of 3-dehydroshikimate (DHSA) to yield shikimate (SA). This chain is Shikimate dehydrogenase (NADP(+)), found in Helicobacter acinonychis (strain Sheeba).